Consider the following 350-residue polypeptide: Ferredoxin--NADP reductase (350 aa).

FAD-binding residues include T14, D33, Q41, Y46, A86, F121, D286, and T327.

The protein belongs to the ferredoxin--NADP reductase type 2 family. As to quaternary structure, homodimer. FAD is required as a cofactor.

The enzyme catalyses 2 reduced [2Fe-2S]-[ferredoxin] + NADP(+) + H(+) = 2 oxidized [2Fe-2S]-[ferredoxin] + NADPH. This chain is Ferredoxin--NADP reductase, found in Flavobacterium johnsoniae (strain ATCC 17061 / DSM 2064 / JCM 8514 / BCRC 14874 / CCUG 350202 / NBRC 14942 / NCIMB 11054 / UW101) (Cytophaga johnsonae).